A 1025-amino-acid polypeptide reads, in one-letter code: Dihydropyrimidine dehydrogenase [NADP(+)] (1025 aa).

Residues Met-1–Pro-3 constitute a propeptide that is removed on maturation. Residues Glu-69–Phe-100 enclose the 4Fe-4S ferredoxin-type 1 domain. [4Fe-4S] cluster is bound by residues Cys-79, Cys-82, Cys-87, and Cys-91. Val-129 serves as a coordination point for FAD. Residues Cys-130, Cys-136, Cys-140, and Gln-156 each coordinate [4Fe-4S] cluster. Residues Gly-194–Ala-198, Glu-218–Leu-226, Arg-235, and Leu-261 each bind FAD. Residues Ala-340–Thr-343, Arg-364–Lys-365, and Arg-371 contribute to the NADP(+) site. Position 384 is an N6-acetyllysine (Lys-384). NADP(+) contacts are provided by residues Ala-437 to Gly-439 and Asp-481 to Asn-487. FAD is bound at residue Gly-480–Thr-489. FMN contacts are provided by residues Ser-550 and Lys-574–Thr-575. Residues Asn-609 and Asn-668–Ser-670 contribute to the substrate site. The active-site Proton acceptor is the Cys-671. Lys-709 serves as a coordination point for FMN. Position 736 to 737 (Asn-736 to Thr-737) interacts with substrate. Residues Gly-767, Thr-793–Gly-795, and Cys-816–Ser-817 contribute to the FMN site. 4Fe-4S ferredoxin-type domains are found at residues Val-944 to Glu-976 and His-978 to Arg-1007. Positions 953, 956, 959, 963, 986, 989, 992, and 996 each coordinate [4Fe-4S] cluster.

The protein belongs to the dihydropyrimidine dehydrogenase family. As to quaternary structure, homodimer. It depends on FAD as a cofactor. FMN is required as a cofactor. Requires [4Fe-4S] cluster as cofactor.

The protein resides in the cytoplasm. The catalysed reaction is 5,6-dihydrouracil + NADP(+) = uracil + NADPH + H(+). It carries out the reaction 5,6-dihydrothymine + NADP(+) = thymine + NADPH + H(+). Its pathway is amino-acid biosynthesis; beta-alanine biosynthesis. Inactivated by 5-iodouracil. Its function is as follows. Involved in pyrimidine base degradation. Catalyzes the reduction of uracil and thymine. This Sus scrofa (Pig) protein is Dihydropyrimidine dehydrogenase [NADP(+)] (DPYD).